Here is a 401-residue protein sequence, read N- to C-terminus: All trans-polyprenyl-diphosphate synthase PDSS2 (401 aa).

The protein belongs to the FPP/GGPP synthase family. As to quaternary structure, heterotetramer composed of 2 PDSS1/DPS1 and 2 PDSS2/DLP1 subunits.

The protein resides in the mitochondrion. It catalyses the reaction 7 isopentenyl diphosphate + (2E,6E)-farnesyl diphosphate = all-trans-decaprenyl diphosphate + 7 diphosphate. It carries out the reaction 6 isopentenyl diphosphate + (2E,6E)-farnesyl diphosphate = all-trans-nonaprenyl diphosphate + 6 diphosphate. Its pathway is cofactor biosynthesis; ubiquinone biosynthesis. Functionally, heterotetrameric enzyme that catalyzes the condensation of farnesyl diphosphate (FPP), which acts as a primer, and isopentenyl diphosphate (IPP) to produce prenyl diphosphates of varying chain lengths and participates in the determination of the side chain of ubiquinone. Supplies nona and decaprenyl diphosphate, the precursors for the side chain of the isoprenoid quinones ubiquinone-9 (Q9) and ubiquinone-10 (Q10) respectively. The enzyme adds isopentenyl diphosphate molecules sequentially to farnesyl diphosphate with trans stereochemistry. May play a role during cerebellar development. May regulate mitochondrial respiratory chain function. In Mus musculus (Mouse), this protein is All trans-polyprenyl-diphosphate synthase PDSS2.